The following is a 1291-amino-acid chain: 1-phosphatidylinositol 4,5-bisphosphate phosphodiesterase gamma-1 (1291 aa).

Ala-2 is subject to N-acetylalanine. In terms of domain architecture, PH 1 spans 27-142 (RSLEVGTVMT…WIRGLTWLME (116 aa)). Residues 152-187 (QIERWLRKQFYSVDRNREDRISAKDLKNMLSQVNYR) form the EF-hand domain. Asp-165, Asn-167, Glu-169, Arg-171, and Asp-176 together coordinate Ca(2+). Residues 320 to 464 (DTMNNPLSHY…LKRKILIKHK (145 aa)) form the PI-PLC X-box domain. Catalysis depends on residues His-335 and His-380. The region spanning 489 to 523 (SIKNGILYLEDPVNHEWYPHYFVLTSSKIYYSEET) is the PH 2; first part domain. Tyr-506 carries the post-translational modification Phosphotyrosine. The segment at 522 to 544 (ETSSDQGNEDEEEPKEASGSTEL) is disordered. 2 consecutive SH2 domains span residues 550-657 (WFHG…SEPV) and 668-756 (WYHA…RYPI). At Tyr-771 the chain carries Phosphotyrosine; by SYK. 2 positions are modified to phosphotyrosine: Tyr-775 and Tyr-783. At Tyr-783 the chain carries Phosphotyrosine; by ITK, SYK and TXK. In terms of domain architecture, SH3 spans 791–851 (TFKCAVKALF…PSNYVEEMVS (61 aa)). The 37-residue stretch at 895-931 (FVFSISMASVAHWSLDVAADSQEELQDWVKKIREVAQ) folds into the PH 2; second part domain. Residues 953-1070 (LSELVVYCRP…GYVLQPSVMR (118 aa)) enclose the PI-PLC Y-box domain. Tyr-977 bears the Phosphotyrosine mark. Residues 1071-1194 (DEAFDPFDKS…TGYRAVPLKN (124 aa)) enclose the C2 domain. Ser-1222, Ser-1228, and Ser-1249 each carry phosphoserine. Tyr-1254 is subject to Phosphotyrosine. The residue at position 1264 (Ser-1264) is a Phosphoserine. The interval 1271–1291 (HFDGRDRRTPRRTRVNGDNRL) is disordered.

Interacts with AGAP2 via its SH3 domain. Interacts (via SH2 domain) with RET. Interacts with FLT1 (tyrosine-phosphorylated). Interacts (via SH2 domain) with FGFR1, FGFR2, FGFR3 and FGFR4 (phosphorylated). Interacts with LAT (phosphorylated) upon TCR activation. Interacts (via SH3 domain) with the Pro-rich domain of TNK1. Associates with BLNK, VAV1, GRB2 and NCK1 in a B-cell antigen receptor-dependent fashion. Interacts with CBLB in activated T-cells; which inhibits phosphorylation. Interacts with SHB. Interacts (via SH3 domain) with the Arg/Gly-rich-flanked Pro-rich domains of KHDRBS1/SAM68. This interaction is selectively regulated by arginine methylation of KHDRBS1/SAM68. Interacts with INPP5D/SHIP1, THEMIS and CLNK. Interacts with AXL, FLT4 and KIT. Interacts with RALGPS1. Interacts (via the SH2 domains) with VIL1 (phosphorylated at C-terminus tyrosine phosphorylation sites). Interacts (via SH2 domain) with PDGFRA and PDGFRB (tyrosine phosphorylated). Interacts with PIP5K1C. Interacts with NTRK1 and NTRK2 (phosphorylated upon ligand-binding). Interacts with SYK; activates PLCG1. Interacts with GRB2, LAT and THEMIS upon TCR activation in thymocytes. Interacts with TESPA1; the association is increased with prolonged stimulation of the TCR and may facilitate the assembly of the LAT signalosome. Interacts (via C-terminal proline-rich domain (PRD)) with PLCG1 (via SH3 domain); this interaction leads to guanine nucleotide exchange from PlCG1 to DNM1 and enhances DNM1-dependent endocytosis. The cofactor is Ca(2+). Post-translationally, ubiquitinated by CBLB in activated T-cells. In terms of processing, tyrosine phosphorylated in response to signaling via activated FLT3, KIT and PDGFRA. Tyrosine phosphorylated by activated FGFR1, FGFR2, FGFR3 and FGFR4. Tyrosine phosphorylated by activated FLT1 and KDR. Tyrosine phosphorylated by activated PDGFRB. The receptor-mediated activation of PLCG1 involves its phosphorylation by tyrosine kinases, in response to ligation of a variety of growth factor receptors and immune system receptors. For instance, SYK phosphorylates and activates PLCG1 in response to ligation of the B-cell receptor. May be dephosphorylated by PTPRJ. Phosphorylated by ITK and TXK on Tyr-783 upon TCR activation in T-cells.

The protein localises to the cell projection. It is found in the lamellipodium. It localises to the ruffle. It catalyses the reaction a 1,2-diacyl-sn-glycero-3-phospho-(1D-myo-inositol-4,5-bisphosphate) + H2O = 1D-myo-inositol 1,4,5-trisphosphate + a 1,2-diacyl-sn-glycerol + H(+). The enzyme catalyses a 1,2-diacyl-sn-glycero-3-phospho-(1D-myo-inositol) + H2O = 1D-myo-inositol 1-phosphate + a 1,2-diacyl-sn-glycerol + H(+). Its activity is regulated as follows. Activated by phosphorylation on tyrosine residues. Functionally, mediates the production of the second messenger molecules diacylglycerol (DAG) and inositol 1,4,5-trisphosphate (IP3). Plays an important role in the regulation of intracellular signaling cascades. Becomes activated in response to ligand-mediated activation of receptor-type tyrosine kinases, such as PDGFRA, PDGFRB, EGFR, FGFR1, FGFR2, FGFR3 and FGFR4. Plays a role in actin reorganization and cell migration. Guanine nucleotide exchange factor that binds the GTPase DNM1 and catalyzes the dissociation of GDP, allowing a GTP molecule to bind in its place, therefore enhancing DNM1-dependent endocytosis. The polypeptide is 1-phosphatidylinositol 4,5-bisphosphate phosphodiesterase gamma-1 (Bos taurus (Bovine)).